The following is a 222-amino-acid chain: Riboflavin kinase (222 aa).

The segment at 1–92 (MVLAEDLECL…CRLFAHEGGH (92 aa)) is H-T-H motif-like. The riboflavin kinase stretch occupies residues 93–222 (YTLPGIVISG…DRVNVEVAYD (130 aa)). Residue 102–107 (GLGEGR) coordinates CDP. Residues threonine 131 and asparagine 133 each contribute to the Mg(2+) site. The FMN site is built by serine 188 and glutamate 196. Residue 201–204 (VGLR) coordinates CDP.

It belongs to the archaeal riboflavin kinase family. It depends on Mg(2+) as a cofactor.

The enzyme catalyses riboflavin + CTP = CDP + FMN + H(+). It participates in cofactor biosynthesis; FMN biosynthesis; FMN from riboflavin (CTP route): step 1/1. Functionally, catalyzes the CTP-dependent phosphorylation of riboflavin (vitamin B2) to form flavin mononucleotide (FMN). This Methanoregula boonei (strain DSM 21154 / JCM 14090 / 6A8) protein is Riboflavin kinase (ribK).